The chain runs to 729 residues: Fatty acid oxidation complex subunit alpha (729 aa).

Residues 1 to 189 form an enoyl-CoA hydratase/isomerase region; sequence MLYKGDTLYL…KIGLVDGVVK (189 aa). D296 contributes to the substrate binding site. The tract at residues 311–729 is 3-hydroxyacyl-CoA dehydrogenase; it reads ETPKQAAVLG…ARPVGDLKTA (419 aa). Residues M324, D343, 400-402, K407, and S429 each bind NAD(+); that span reads IVE. H450 (for 3-hydroxyacyl-CoA dehydrogenase activity) is an active-site residue. Residue N453 participates in NAD(+) binding. 2 residues coordinate substrate: N500 and Y660. Residues 708 to 729 form a disordered region; the sequence is RHNEPYYPPVEPARPVGDLKTA.

It in the N-terminal section; belongs to the enoyl-CoA hydratase/isomerase family. This sequence in the C-terminal section; belongs to the 3-hydroxyacyl-CoA dehydrogenase family. In terms of assembly, heterotetramer of two alpha chains (FadB) and two beta chains (FadA).

It catalyses the reaction a (3S)-3-hydroxyacyl-CoA + NAD(+) = a 3-oxoacyl-CoA + NADH + H(+). The catalysed reaction is a (3S)-3-hydroxyacyl-CoA = a (2E)-enoyl-CoA + H2O. It carries out the reaction a 4-saturated-(3S)-3-hydroxyacyl-CoA = a (3E)-enoyl-CoA + H2O. The enzyme catalyses (3S)-3-hydroxybutanoyl-CoA = (3R)-3-hydroxybutanoyl-CoA. It catalyses the reaction a (3Z)-enoyl-CoA = a 4-saturated (2E)-enoyl-CoA. The catalysed reaction is a (3E)-enoyl-CoA = a 4-saturated (2E)-enoyl-CoA. The protein operates within lipid metabolism; fatty acid beta-oxidation. Its function is as follows. Involved in the aerobic and anaerobic degradation of long-chain fatty acids via beta-oxidation cycle. Catalyzes the formation of 3-oxoacyl-CoA from enoyl-CoA via L-3-hydroxyacyl-CoA. It can also use D-3-hydroxyacyl-CoA and cis-3-enoyl-CoA as substrate. This Escherichia coli O157:H7 protein is Fatty acid oxidation complex subunit alpha.